The chain runs to 353 residues: Quinolinate synthase (353 aa).

Iminosuccinate contacts are provided by His-47 and Ser-68. Cys-113 provides a ligand contact to [4Fe-4S] cluster. Iminosuccinate contacts are provided by residues 139-141 (YAN) and Ser-156. A [4Fe-4S] cluster-binding site is contributed by Cys-200. Residues 226 to 228 (HPE) and Thr-243 each bind iminosuccinate. Position 297 (Cys-297) interacts with [4Fe-4S] cluster.

It belongs to the quinolinate synthase family. Type 1 subfamily. [4Fe-4S] cluster serves as cofactor.

Its subcellular location is the cytoplasm. The catalysed reaction is iminosuccinate + dihydroxyacetone phosphate = quinolinate + phosphate + 2 H2O + H(+). The protein operates within cofactor biosynthesis; NAD(+) biosynthesis; quinolinate from iminoaspartate: step 1/1. Catalyzes the condensation of iminoaspartate with dihydroxyacetone phosphate to form quinolinate. The polypeptide is Quinolinate synthase (Serratia proteamaculans (strain 568)).